Here is a 238-residue protein sequence, read N- to C-terminus: Sugar fermentation stimulation protein homolog (238 aa).

Belongs to the SfsA family.

The chain is Sugar fermentation stimulation protein homolog from Pseudoalteromonas translucida (strain TAC 125).